We begin with the raw amino-acid sequence, 593 residues long: DNA mismatch repair protein MutL (593 aa).

This sequence belongs to the DNA mismatch repair MutL/HexB family.

Functionally, this protein is involved in the repair of mismatches in DNA. It is required for dam-dependent methyl-directed DNA mismatch repair. May act as a 'molecular matchmaker', a protein that promotes the formation of a stable complex between two or more DNA-binding proteins in an ATP-dependent manner without itself being part of a final effector complex. In Leptospira interrogans serogroup Icterohaemorrhagiae serovar copenhageni (strain Fiocruz L1-130), this protein is DNA mismatch repair protein MutL.